Here is a 947-residue protein sequence, read N- to C-terminus: Leucine-rich repeat-containing protein 37B (947 aa).

Positions 1-27 (MSWLRFWGPWPLLTWQLLSLLVKEAQP) are cleaved as a signal peptide. The Extracellular segment spans residues 28–905 (LVWVKDPLQL…EVPGDDYKNK (878 aa)). Disordered stretches follow at residues 42–88 (LGPP…ALPQ), 226–257 (YLSMDTLYPGSLPPELRVNADEPPGPPEQVGL), 294–458 (EVEP…PEPT), and 484–514 (SLTEVTGPPTKLESSQDSLVQSETAPEEQKA). Over residues 311–320 (SMESLAQTPL) the composition is skewed to polar residues. Residue Asn-358 is glycosylated (N-linked (GlcNAc...) asparagine). Composition is skewed to polar residues over residues 404 to 415 (GQAQHSHLTEAT), 436 to 445 (SPTTEETSAQ), and 495 to 507 (LESSQDSLVQSET). LRR repeat units follow at residues 556–577 (IFTTLNFQGNYISYLDGNVWKA), 580–601 (WTEKLILSENYLTELPKDSFEG), 604–625 (YLQYLDLSCNKIRYIERQTFES), 628–649 (FLQYINLGCNLITKLSLGTFQA), 655–676 (FLHNLILNRNPLTTVEDPYLFE), and 679–699 (ALKYLDMGTTHITLTTLKNIL). Residue Asn-789 is glycosylated (N-linked (GlcNAc...) asparagine). A coiled-coil region spans residues 867–897 (DTDQQKTNYINENMEQNEQKEQKSSELMKEV). Residues 906–926 (LIFAISVTVILIILIIIFCLI) form a helical membrane-spanning segment. The Cytoplasmic segment spans residues 927-947 (EVNSHKRASEKYKDNPSISGA).

The protein resides in the membrane. The chain is Leucine-rich repeat-containing protein 37B (LRRC37B) from Homo sapiens (Human).